The following is a 416-amino-acid chain: Adipocyte plasma membrane-associated protein (416 aa).

The tract at residues methionine 1–serine 32 is disordered. Serine 2 bears the N-acetylserine mark. At serine 2–arginine 40 the chain is on the cytoplasmic side. Threonine 19 bears the Phosphothreonine mark. The chain crosses the membrane as a helical; Signal-anchor for type II membrane protein span at residues valine 41–leucine 61. Residues glutamate 62–valine 416 lie on the Extracellular side of the membrane. Residues asparagine 160 and asparagine 196 are each glycosylated (N-linked (GlcNAc...) asparagine).

This sequence belongs to the strictosidine synthase family. As to expression, liver, glomerular and tubular structures of the kidney, endothelial cells, arterial wall and pancreatic islets of Langerhans (at protein level). Found ubiquitously in adult as well as in embryonic tissues. In adult tissue, the highest expression is found in the liver, placenta and heart. Found on the cell surface of monocytes. In embryonic tissue, the highest expression levels is found in the liver and the kidney.

The protein localises to the membrane. Exhibits strong arylesterase activity with beta-naphthyl acetate and phenyl acetate. May play a role in adipocyte differentiation. The polypeptide is Adipocyte plasma membrane-associated protein (APMAP) (Homo sapiens (Human)).